The chain runs to 203 residues: Recombination protein RecR (203 aa).

Residues 57–72 (CARCNTFSETELCVLC) form a C4-type zinc finger. Residues 80–175 (DVLCVVEMPA…SVSRIARGLP (96 aa)) form the Toprim domain.

The protein belongs to the RecR family.

May play a role in DNA repair. It seems to be involved in an RecBC-independent recombinational process of DNA repair. It may act with RecF and RecO. The polypeptide is Recombination protein RecR (Laribacter hongkongensis (strain HLHK9)).